Here is a 484-residue protein sequence, read N- to C-terminus: Coronin-1B (484 aa).

S2 carries the phosphoserine modification. WD repeat units follow at residues G80–P120, G130–R170, L174–E213, A217–A260, and D265–H305. Residues K447–N481 adopt a coiled-coil conformation.

This sequence belongs to the WD repeat coronin family. Forms homooligomers, but does not form complexes with the other coronins. Interacts with Arp2/3 complex components, including ACTR2, ARPC1B and ARPC2. Binds actin. Phosphorylation on Ser-2 regulates the interaction with the Arp2/3 complex and cell motility in fibroblasts. Phosphorylation does not seem to affect subcellular location.

The protein resides in the cytoplasm. The protein localises to the cytoskeleton. It is found in the stress fiber. Functionally, regulates leading edge dynamics and cell motility in fibroblasts. May be involved in cytokinesis and signal transduction. The chain is Coronin-1B (Coro1b) from Rattus norvegicus (Rat).